The sequence spans 173 residues: Putative phosphoesterase GTNG_0743 (173 aa).

His-34 functions as the Proton donor in the catalytic mechanism. Short sequence motifs (HXTX) lie at residues 34-37 (HITL) and 115-118 (HITI). Catalysis depends on His-115, which acts as the Proton acceptor.

It belongs to the 2H phosphoesterase superfamily. YjcG family.

The chain is Putative phosphoesterase GTNG_0743 from Geobacillus thermodenitrificans (strain NG80-2).